Here is a 329-residue protein sequence, read N- to C-terminus: Malate dehydrogenase (329 aa).

12 to 18 (GAAGQIG) serves as a coordination point for NAD(+). Substrate contacts are provided by arginine 95 and arginine 101. Residues asparagine 108, glutamine 115, and 132–134 (VGN) each bind NAD(+). Substrate is bound by residues asparagine 134 and arginine 165. The active-site Proton acceptor is histidine 190.

It belongs to the LDH/MDH superfamily. MDH type 2 family.

The enzyme catalyses (S)-malate + NAD(+) = oxaloacetate + NADH + H(+). Functionally, catalyzes the reversible oxidation of malate to oxaloacetate. The sequence is that of Malate dehydrogenase from Bordetella avium (strain 197N).